The primary structure comprises 184 residues: Large ribosomal subunit protein uL5 (184 aa).

Belongs to the universal ribosomal protein uL5 family. Component of the large ribosomal subunit. Interacts with Fmr1 to form the RNA-induced silencing complex (RISC), a ribonucleoprotein (RNP) complex involved in translation regulation, other components of the complex are RpL5, Rm62, AGO2 and Dcr-1.

The protein resides in the nucleus. Its subcellular location is the cytoplasm. Its function is as follows. Component of the ribosome, a large ribonucleoprotein complex responsible for the synthesis of proteins in the cell. The small ribosomal subunit (SSU) binds messenger RNAs (mRNAs) and translates the encoded message by selecting cognate aminoacyl-transfer RNA (tRNA) molecules. The large subunit (LSU) contains the ribosomal catalytic site termed the peptidyl transferase center (PTC), which catalyzes the formation of peptide bonds, thereby polymerizing the amino acids delivered by tRNAs into a polypeptide chain. The nascent polypeptides leave the ribosome through a tunnel in the LSU and interact with protein factors that function in enzymatic processing, targeting, and the membrane insertion of nascent chains at the exit of the ribosomal tunnel. The chain is Large ribosomal subunit protein uL5 (RpL11) from Drosophila melanogaster (Fruit fly).